The chain runs to 492 residues: E1B 55 kDa protein (492 aa).

Positions 22-112 are disordered; the sequence is ENMEGSQDED…ERNPSGNNSR (91 aa). Residues 34 to 44 show a composition bias toward low complexity; that stretch reads RLLASAASGSS. Phosphoserine is present on residues Ser486 and Ser487. The residue at position 491 (Thr491) is a Phosphothreonine.

The protein belongs to the adenoviridae E1B 55 kDa protein family. In terms of assembly, interacts with host PML-4 and PML-5; this interaction promotes efficient subnuclear targeting of E1B-55K to PML nuclear bodies. Interacts with E4-ORF3 protein. Interacts with E4-ORF6 protein.

The protein localises to the host nucleus. It is found in the host cytoplasm. Functionally, plays a major role to prevent cellular inhibition of viral genome replication. Assembles an SCF-like E3 ubiquitin ligase complex based on the cellular proteins ELOB, ELOC, CUL5 and RBX1, in cooperation with viral E4orf6. This viral RING-type ligase ubiquitinates cellular substrates and targets them to proteasomal degradation: TP53/p53, LIG4, MRE11-RAD50-NBS1 (MRN) complex, ITGA3, DAXX and BLM. E1B-55K probably acts as the substrate-specific adapter of the SCF-like E3 ubiquitin ligase complex. Degradation of host TP53/p53 activity is essential for preventing E1A-induced TP53 accumulation that would otherwise lead to cell apoptosis and growth arrest. E1B-55K also inactivates TP53 transcription-factor activity by binding its transactivation domain. E1B-55K also functions as a SUMO1 E3 ligase for TP53 which causes the latter to be sequestered in promyelocytic leukemia (PML) nuclear bodies thereby contributing to maximal inhibition of TP53 function. The polypeptide is E1B 55 kDa protein (Human adenovirus B serotype 7 (HAdV-7)).